The following is a 517-amino-acid chain: Intermediate filament family orphan 2 (517 aa).

The region spanning 53 to 484 (NIHLLKGLNV…RLIKGSADRN (432 aa)) is the IF rod domain. 3 disordered regions span residues 104 to 129 (EQAV…SSGA), 330 to 349 (KVAS…RFSD), and 478 to 517 (KGSA…PMVS). The segment covering 485 to 497 (SPSPSSVASSDSG) has biased composition (low complexity). The segment covering 501–517 (EIQDEFEREADVEPMVS) has biased composition (acidic residues).

The protein belongs to the intermediate filament family.

The protein is Intermediate filament family orphan 2 (IFFO2) of Homo sapiens (Human).